Here is a 349-residue protein sequence, read N- to C-terminus: GDSL esterase/lipase At2g19060 (349 aa).

A signal peptide spans 1-25 (MADKMFKALLWAFATAVVMAEAVRG). The Nucleophile role is filled by serine 37. N-linked (GlcNAc...) asparagine glycosylation is present at asparagine 178. Active-site residues include aspartate 317 and histidine 320.

Belongs to the 'GDSL' lipolytic enzyme family.

The protein localises to the secreted. This Arabidopsis thaliana (Mouse-ear cress) protein is GDSL esterase/lipase At2g19060.